The chain runs to 255 residues: MYSLQVEDIHKRYGSHEVLRGVSLRAGKGDVISIIGSSGSGKSTFLRCVNFLEKPCAGHIRVGDEELRTRPGALGELRAADPRQLQRIRSRLAMVFQHFNLWSHLTVLENVVECPVNVLRMNRDDAVARARHYLAKVGLAEKVERQYPCELSGGQQQRVAIARALAMEPQVMLFDEPTSALDPELVGEVLKVMQQLAEEGRTMVLVTHEMAFARQVSSHVIFLHQGVIEEEGTPDQVFGAPRSERLRQFLAGNLK.

The ABC transporter domain maps to leucine 4–leucine 250. Positions 38, 39, 41, 42, 43, and 44 each coordinate ATP.

This sequence belongs to the ABC transporter superfamily. As to quaternary structure, the HisPMQJ complex is composed of two ATP-binding proteins (HisP), two transmembrane proteins (HisM and HisQ) and a solute-binding protein (HisJ).

Its subcellular location is the cell inner membrane. The catalysed reaction is a polar amino acid(out) + ATP + H2O = a polar amino acid(in) + ADP + phosphate + H(+). It carries out the reaction L-histidine(out) + ATP + H2O = L-histidine(in) + ADP + phosphate + H(+). Part of the ABC transporter complex HisPMQJ involved in histidine transport. Shows ATPase activity. Responsible for energy coupling to the transport system. This is Histidine transport ATP-binding protein HisP (hisP) from Pseudomonas aeruginosa (strain ATCC 15692 / DSM 22644 / CIP 104116 / JCM 14847 / LMG 12228 / 1C / PRS 101 / PAO1).